A 336-amino-acid polypeptide reads, in one-letter code: Ribosomal RNA large subunit methyltransferase F (336 aa).

The protein belongs to the methyltransferase superfamily. METTL16/RlmF family.

Its subcellular location is the cytoplasm. It catalyses the reaction adenosine(1618) in 23S rRNA + S-adenosyl-L-methionine = N(6)-methyladenosine(1618) in 23S rRNA + S-adenosyl-L-homocysteine + H(+). Its function is as follows. Specifically methylates the adenine in position 1618 of 23S rRNA. This Serratia proteamaculans (strain 568) protein is Ribosomal RNA large subunit methyltransferase F.